A 233-amino-acid chain; its full sequence is Small ribosomal subunit protein uS3 (233 aa).

A KH type-2 domain is found at 39-107; that stretch reads VRKYLTKELE…PAQINIAEVR (69 aa). The tract at residues 214 to 233 is disordered; sequence VEQPEKPSAQPKKQQRKGRK.

This sequence belongs to the universal ribosomal protein uS3 family. Part of the 30S ribosomal subunit. Forms a tight complex with proteins S10 and S14.

Its function is as follows. Binds the lower part of the 30S subunit head. Binds mRNA in the 70S ribosome, positioning it for translation. The polypeptide is Small ribosomal subunit protein uS3 (Pectobacterium atrosepticum (strain SCRI 1043 / ATCC BAA-672) (Erwinia carotovora subsp. atroseptica)).